The primary structure comprises 268 residues: Acyl-CoA-binding domain-containing protein 4 (268 aa).

Residues 12 to 101 (CQKQFQAAVS…MKLVAQKVID (90 aa)) enclose the ACB domain. An acyl-CoA contacts are provided by residues 23 to 32 (IQNLPKNGSY), 43 to 47 (YSYYK), Lys69, and Tyr88. The segment at 151–175 (AVSEPPCLPKEPAPPSPESHSPRDL) is disordered. Over residues 156–167 (PCLPKEPAPPSP) the composition is skewed to pro residues. Phosphoserine is present on residues Ser166 and Ser171.

Binds medium- and long-chain acyl-CoA esters and may function as an intracellular carrier of acyl-CoA esters. The sequence is that of Acyl-CoA-binding domain-containing protein 4 (ACBD4) from Homo sapiens (Human).